Here is a 260-residue protein sequence, read N- to C-terminus: Thiazole synthase (260 aa).

Residue lysine 96 is the Schiff-base intermediate with DXP of the active site. 1-deoxy-D-xylulose 5-phosphate-binding positions include glycine 157, 184–185 (AG), and 206–207 (NT).

This sequence belongs to the ThiG family. Homotetramer. Forms heterodimers with either ThiH or ThiS.

Its subcellular location is the cytoplasm. It carries out the reaction [ThiS sulfur-carrier protein]-C-terminal-Gly-aminoethanethioate + 2-iminoacetate + 1-deoxy-D-xylulose 5-phosphate = [ThiS sulfur-carrier protein]-C-terminal Gly-Gly + 2-[(2R,5Z)-2-carboxy-4-methylthiazol-5(2H)-ylidene]ethyl phosphate + 2 H2O + H(+). It participates in cofactor biosynthesis; thiamine diphosphate biosynthesis. Catalyzes the rearrangement of 1-deoxy-D-xylulose 5-phosphate (DXP) to produce the thiazole phosphate moiety of thiamine. Sulfur is provided by the thiocarboxylate moiety of the carrier protein ThiS. In vitro, sulfur can be provided by H(2)S. The sequence is that of Thiazole synthase from Rhodopseudomonas palustris (strain ATCC BAA-98 / CGA009).